The sequence spans 336 residues: Iron(3+)-hydroxamate import system permease protein FhuG (336 aa).

Transmembrane regions (helical) follow at residues 9-29, 63-83, 91-111, 124-144, 155-175, 193-213, 245-265, 285-305, and 313-333; these read LIVM…SLNL, IILS…LQSV, PGIL…IYFF, FMLP…IYIL, LILV…IFQL, IWGA…ILLL, ILLL…GGIA, TLIP…DTLA, and EIPV…YLLM.

The protein belongs to the binding-protein-dependent transport system permease family. FecCD subfamily. As to quaternary structure, the complex is composed of an ATP-binding protein (FhuC), two transmembrane proteins (FhuB and FhuG) and a solute-binding protein (FhuD or YxeB).

It is found in the cell membrane. Functionally, part of the ABC transporter complex FhuBGCD involved in iron(3+)-hydroxamate import. Responsible for the translocation of the substrate across the membrane. This Bacillus subtilis (strain 168) protein is Iron(3+)-hydroxamate import system permease protein FhuG (fhuG).